Reading from the N-terminus, the 225-residue chain is MQLVTAAEMQTIDNYTVETIGMPQDVLIERAAMSVIDVIGAGHFNLDHILVLAGLGNNGADGVAISRLLYAQGFNVSLQFVGNVTRAKDSVKRQLDIIEKYGLVRAEKSDFNEATLIIDAIFGTGLNNLLPEGLQKMIKAANHIEKTVIAVDTPTGIDATTGEVRGAALKAHTTVTFGYNKIGLTQRVGGYLSGNVIVKDIGLLTPQDFNFSLPDKENSPSVATS.

Residues 9 to 209 (MQTIDNYTVE…DIGLLTPQDF (201 aa)) form the YjeF N-terminal domain. A (6S)-NADPHX-binding site is contributed by 57-61 (NNGAD). 2 residues coordinate K(+): Asn58 and Asp119. Residues 123–129 (GTGLNNL) and Asp152 contribute to the (6S)-NADPHX site. Thr155 provides a ligand contact to K(+).

Belongs to the NnrE/AIBP family. The cofactor is K(+).

The enzyme catalyses (6R)-NADHX = (6S)-NADHX. It carries out the reaction (6R)-NADPHX = (6S)-NADPHX. Its function is as follows. Catalyzes the epimerization of the S- and R-forms of NAD(P)HX, a damaged form of NAD(P)H that is a result of enzymatic or heat-dependent hydration. This is a prerequisite for the S-specific NAD(P)H-hydrate dehydratase to allow the repair of both epimers of NAD(P)HX. The chain is NAD(P)H-hydrate epimerase from Leuconostoc kimchii (strain IMSNU 11154 / KCTC 2386 / IH25).